Here is a 305-residue protein sequence, read N- to C-terminus: MIKQRTLKRIVQATGVGLHTGKKVTLTLRPAPANTGVIYRRTDLNPPVDFPADAKSVRDTMLCTCLVNEHDVRISTVEHLNAALAGLGIDNIVIEVDAPEIPIMDGSAAPFVYLLLDAGIEELNSAKKFVRIKETVRVEDGDKWAEFRPYNGFTLDFTIDFNHPAIDSSTQRYAMNFSADAFMRQISRARTFGFMRDIEYLQSRGLCLGGSFDCAIVVDDYRVLNEDGLRFEDEFVRHKMLDAIGDLFMCGHNIIGAFTAYKSGHALNNKLLQAVLAKQEAWEYVTFQDDAELPLAFKAPSTVLA.

Histidine 79, histidine 238, and aspartate 242 together coordinate Zn(2+). The Proton donor role is filled by histidine 265.

The protein belongs to the LpxC family. Zn(2+) serves as cofactor.

It carries out the reaction a UDP-3-O-[(3R)-3-hydroxyacyl]-N-acetyl-alpha-D-glucosamine + H2O = a UDP-3-O-[(3R)-3-hydroxyacyl]-alpha-D-glucosamine + acetate. The protein operates within glycolipid biosynthesis; lipid IV(A) biosynthesis; lipid IV(A) from (3R)-3-hydroxytetradecanoyl-[acyl-carrier-protein] and UDP-N-acetyl-alpha-D-glucosamine: step 2/6. Its function is as follows. Catalyzes the hydrolysis of UDP-3-O-myristoyl-N-acetylglucosamine to form UDP-3-O-myristoylglucosamine and acetate, the committed step in lipid A biosynthesis. This is UDP-3-O-acyl-N-acetylglucosamine deacetylase from Escherichia fergusonii (strain ATCC 35469 / DSM 13698 / CCUG 18766 / IAM 14443 / JCM 21226 / LMG 7866 / NBRC 102419 / NCTC 12128 / CDC 0568-73).